Consider the following 227-residue polypeptide: Small ribosomal subunit protein uS7 (227 aa).

Acidic residues-rich tracts occupy residues 1–12 (MSESDTDPDIDD) and 20–31 (NDVDVAVDESES). Positions 1–43 (MSESDTDPDIDDDAHNNGDNDVDVAVDESESAETTTDTDTASA) are disordered. The segment covering 32-43 (AETTTDTDTASA) has biased composition (low complexity).

It belongs to the universal ribosomal protein uS7 family. As to quaternary structure, part of the 30S ribosomal subunit.

Functionally, one of the primary rRNA binding proteins, it binds directly to 16S rRNA where it nucleates assembly of the head domain of the 30S subunit. Is located at the subunit interface close to the decoding center. This chain is Small ribosomal subunit protein uS7, found in Haloquadratum walsbyi (strain DSM 16790 / HBSQ001).